Here is a 243-residue protein sequence, read N- to C-terminus: Cysteine-rich secretory protein 2 (243 aa).

Residues 1–21 (MALLPVLFLVTVLLPSLPAEG) form the signal peptide. The SCP domain occupies 41-169 (VNKHNELRKA…SLKYYYVCQY (129 aa)). 5 disulfide bridges follow: Cys-189-Cys-196, Cys-192-Cys-201, Cys-205-Cys-238, Cys-214-Cys-232, and Cys-223-Cys-236. The ShKT domain occupies 205-238 (CQYQDLLSNCDSLKNTAGCEHELLKEKCKATCLC).

Belongs to the CRISP family. As to quaternary structure, interacts with NSUN4 isoform 3. As to expression, testis and epididymis.

It is found in the secreted. In terms of biological role, may regulate some ion channels' activity and thereby regulate calcium fluxes during sperm capacitation. The polypeptide is Cysteine-rich secretory protein 2 (CRISP2) (Homo sapiens (Human)).